The following is a 234-amino-acid chain: bZIP transcription factor 27 (234 aa).

The short motif at 152–159 (KKRGQDSD) is the Nuclear localization signal element. The bZIP domain occupies 163-213 (GDRRYKRMIKNRESAARSRARKQAYTNELELEIAHLQTENARLKIQQEQLK). Residues 165 to 184 (RRYKRMIKNRESAARSRARK) form a basic motif region. The segment at 191–212 (LELEIAHLQTENARLKIQQEQL) is leucine-zipper. Residue Thr-231 is modified to Phosphothreonine.

This sequence belongs to the bZIP family. In terms of assembly, self-interacts. Interacts with FT and FD/BZIP14. Interacts with CPK33. Post-translationally, phosphorylated. As to expression, expressed on the flanks of the shoot apex.

The protein resides in the nucleus. Functionally, transcription factor required for the transition to flowering promoted by FT. This is bZIP transcription factor 27 from Arabidopsis thaliana (Mouse-ear cress).